The following is a 178-amino-acid chain: C-phycoerythrin class 2 subunit beta (178 aa).

Cys50 and Cys61 together coordinate phycourobilin. (2R,3E)-phycoerythrobilin is bound by residues Cys82 and Cys159.

The protein belongs to the phycobiliprotein family. In terms of assembly, heterodimer of an alpha and a beta chain. In terms of processing, contains two covalently linked phycoerythrobilin chromophores and one covalently linked phycourobilin chromophore.

It is found in the cellular thylakoid membrane. Its function is as follows. Light-harvesting photosynthetic bile pigment-protein from the phycobiliprotein complex. In Synechococcus sp. (strain WH8020), this protein is C-phycoerythrin class 2 subunit beta (mpeB).